We begin with the raw amino-acid sequence, 189 residues long: Phosphoheptose isomerase (189 aa).

One can recognise an SIS domain in the interval V34 to G189. N49–G51 contacts substrate. Residues H58 and E62 each coordinate Zn(2+). Substrate-binding positions include E62, N91–D92, S117–S119, S122, and Q169. Zn(2+)-binding residues include Q169 and H177.

It belongs to the SIS family. GmhA subfamily. As to quaternary structure, homotetramer. The cofactor is Zn(2+).

It is found in the cytoplasm. The enzyme catalyses 2 D-sedoheptulose 7-phosphate = D-glycero-alpha-D-manno-heptose 7-phosphate + D-glycero-beta-D-manno-heptose 7-phosphate. Its pathway is carbohydrate biosynthesis; D-glycero-D-manno-heptose 7-phosphate biosynthesis; D-glycero-alpha-D-manno-heptose 7-phosphate and D-glycero-beta-D-manno-heptose 7-phosphate from sedoheptulose 7-phosphate: step 1/1. Its function is as follows. Catalyzes the isomerization of sedoheptulose 7-phosphate in D-glycero-D-manno-heptose 7-phosphate. This is Phosphoheptose isomerase from Campylobacter concisus (strain 13826).